Reading from the N-terminus, the 404-residue chain is Protein ORF23 (404 aa).

Belongs to the lymphocryptovirus BTRF1 family. Interacts with ORF34.

The protein resides in the host nucleus. It localises to the host cytoplasm. Functionally, plays a role in the expression of late genes. This chain is Protein ORF23 (ORF23), found in Homo sapiens (Human).